The chain runs to 217 residues: Dual specificity phosphatase 29 (217 aa).

The 149-residue stretch at His-46–Leu-194 folds into the Tyrosine-protein phosphatase domain. Position 138–145 (His-138–Arg-145) interacts with substrate. Catalysis depends on Cys-139, which acts as the Phosphocysteine intermediate.

The protein belongs to the protein-tyrosine phosphatase family. Non-receptor class dual specificity subfamily.

The protein localises to the cytoplasm. Its subcellular location is the nucleus. It catalyses the reaction O-phospho-L-tyrosyl-[protein] + H2O = L-tyrosyl-[protein] + phosphate. It carries out the reaction O-phospho-L-seryl-[protein] + H2O = L-seryl-[protein] + phosphate. The enzyme catalyses O-phospho-L-threonyl-[protein] + H2O = L-threonyl-[protein] + phosphate. Dual specificity phosphatase able to dephosphorylate phosphotyrosine, phosphoserine and phosphothreonine residues within the same substrate, with a preference for phosphotyrosine as a substrate. Involved in the modulation of AMPK and MAPK1/2 signaling pathways. This chain is Dual specificity phosphatase 29 (DUSP29), found in Anolis carolinensis (Green anole).